The following is a 308-amino-acid chain: tRNA pseudouridine synthase B (308 aa).

Asp-47 functions as the Nucleophile in the catalytic mechanism.

Belongs to the pseudouridine synthase TruB family. Type 1 subfamily.

The enzyme catalyses uridine(55) in tRNA = pseudouridine(55) in tRNA. Responsible for synthesis of pseudouridine from uracil-55 in the psi GC loop of transfer RNAs. The chain is tRNA pseudouridine synthase B from Xanthomonas euvesicatoria pv. vesicatoria (strain 85-10) (Xanthomonas campestris pv. vesicatoria).